A 101-amino-acid chain; its full sequence is DNA-binding protein Fis (101 aa).

Residues 77–96 (QTRAANMLGINRGTLRKKLK) constitute a DNA-binding region (H-T-H motif).

This sequence belongs to the transcriptional regulatory Fis family. In terms of assembly, homodimer.

Functionally, activates ribosomal RNA transcription. Plays a direct role in upstream activation of rRNA promoters. The chain is DNA-binding protein Fis from Shewanella baltica (strain OS223).